The primary structure comprises 153 residues: uncharacterized protein (153 aa).

A signal peptide spans 1-19 (MRKYIPLVLFIFSWPVLCA). Active-site residues include arginine 46, glutamate 54, and arginine 88.

It belongs to the thermonuclease family.

This is an uncharacterized protein from Escherichia coli O157:H7.